Consider the following 113-residue polypeptide: Large ribosomal subunit protein uL22 (113 aa).

Belongs to the universal ribosomal protein uL22 family. As to quaternary structure, part of the 50S ribosomal subunit.

Its function is as follows. This protein binds specifically to 23S rRNA; its binding is stimulated by other ribosomal proteins, e.g. L4, L17, and L20. It is important during the early stages of 50S assembly. It makes multiple contacts with different domains of the 23S rRNA in the assembled 50S subunit and ribosome. Functionally, the globular domain of the protein is located near the polypeptide exit tunnel on the outside of the subunit, while an extended beta-hairpin is found that lines the wall of the exit tunnel in the center of the 70S ribosome. This chain is Large ribosomal subunit protein uL22, found in Trichlorobacter lovleyi (strain ATCC BAA-1151 / DSM 17278 / SZ) (Geobacter lovleyi).